We begin with the raw amino-acid sequence, 214 residues long: Adenylate kinase (214 aa).

Position 10 to 15 (10 to 15 (GAGKGT)) interacts with ATP. The tract at residues 30 to 59 (STGDMLRAAVKAGTPLGLEAKKVMDAGQLV) is NMP. AMP is bound by residues T31, R36, 57 to 59 (QLV), 85 to 88 (GFPR), and Q92. The interval 122–159 (GRRVHPGSGRVYHVVFNPPKVEGKDDVTGEDLVIRPDD) is LID. ATP contacts are provided by residues R123 and 132–133 (VY). AMP contacts are provided by R156 and R167. Q200 provides a ligand contact to ATP.

The protein belongs to the adenylate kinase family. In terms of assembly, monomer.

The protein localises to the cytoplasm. It catalyses the reaction AMP + ATP = 2 ADP. It participates in purine metabolism; AMP biosynthesis via salvage pathway; AMP from ADP: step 1/1. Functionally, catalyzes the reversible transfer of the terminal phosphate group between ATP and AMP. Plays an important role in cellular energy homeostasis and in adenine nucleotide metabolism. This Shewanella amazonensis (strain ATCC BAA-1098 / SB2B) protein is Adenylate kinase.